The following is a 685-amino-acid chain: DNA-directed RNA polymerase subunit beta' (685 aa).

Cys-69, Cys-71, Cys-87, and Cys-90 together coordinate Zn(2+). Asp-489, Asp-491, and Asp-493 together coordinate Mg(2+).

The protein belongs to the RNA polymerase beta' chain family. RpoC1 subfamily. As to quaternary structure, in plastids the minimal PEP RNA polymerase catalytic core is composed of four subunits: alpha, beta, beta', and beta''. When a (nuclear-encoded) sigma factor is associated with the core the holoenzyme is formed, which can initiate transcription. It depends on Mg(2+) as a cofactor. Zn(2+) serves as cofactor.

It is found in the plastid. Its subcellular location is the chloroplast. The enzyme catalyses RNA(n) + a ribonucleoside 5'-triphosphate = RNA(n+1) + diphosphate. DNA-dependent RNA polymerase catalyzes the transcription of DNA into RNA using the four ribonucleoside triphosphates as substrates. In Buxus microphylla (Littleleaf boxwood), this protein is DNA-directed RNA polymerase subunit beta'.